A 549-amino-acid chain; its full sequence is Dihydroxy-acid dehydratase (549 aa).

Asp78 is a binding site for Mg(2+). Position 119 (Cys119) interacts with [2Fe-2S] cluster. Asp120 and Lys121 together coordinate Mg(2+). Lys121 carries the post-translational modification N6-carboxylysine. A [2Fe-2S] cluster-binding site is contributed by Cys191. Mg(2+) is bound at residue Glu441. Catalysis depends on Ser466, which acts as the Proton acceptor.

This sequence belongs to the IlvD/Edd family. In terms of assembly, homodimer. Requires [2Fe-2S] cluster as cofactor. Mg(2+) serves as cofactor.

It carries out the reaction (2R)-2,3-dihydroxy-3-methylbutanoate = 3-methyl-2-oxobutanoate + H2O. The catalysed reaction is (2R,3R)-2,3-dihydroxy-3-methylpentanoate = (S)-3-methyl-2-oxopentanoate + H2O. It functions in the pathway amino-acid biosynthesis; L-isoleucine biosynthesis; L-isoleucine from 2-oxobutanoate: step 3/4. The protein operates within amino-acid biosynthesis; L-valine biosynthesis; L-valine from pyruvate: step 3/4. Functions in the biosynthesis of branched-chain amino acids. Catalyzes the dehydration of (2R,3R)-2,3-dihydroxy-3-methylpentanoate (2,3-dihydroxy-3-methylvalerate) into 2-oxo-3-methylpentanoate (2-oxo-3-methylvalerate) and of (2R)-2,3-dihydroxy-3-methylbutanoate (2,3-dihydroxyisovalerate) into 2-oxo-3-methylbutanoate (2-oxoisovalerate), the penultimate precursor to L-isoleucine and L-valine, respectively. The sequence is that of Dihydroxy-acid dehydratase from Methanosphaera stadtmanae (strain ATCC 43021 / DSM 3091 / JCM 11832 / MCB-3).